Reading from the N-terminus, the 64-residue chain is Large ribosomal subunit protein bL35 (64 aa).

Residues 1-26 are compositionally biased toward basic residues; that stretch reads MPKMKSHRGASKRFKRTASGKLKRGR. Disordered regions lie at residues 1-28 and 33-52; these read MPKMKSHRGASKRFKRTASGKLKRGRAY and FGNKSTKAKRKLRKASMVSS.

It belongs to the bacterial ribosomal protein bL35 family.

This is Large ribosomal subunit protein bL35 from Exiguobacterium sibiricum (strain DSM 17290 / CCUG 55495 / CIP 109462 / JCM 13490 / 255-15).